A 510-amino-acid chain; its full sequence is 2,3-bisphosphoglycerate-independent phosphoglycerate mutase (510 aa).

Mn(2+) contacts are provided by aspartate 12 and serine 62. Residue serine 62 is the Phosphoserine intermediate of the active site. Substrate is bound by residues histidine 123, 153-154 (RD), arginine 185, arginine 191, 260-263 (RPDR), and lysine 335. 5 residues coordinate Mn(2+): aspartate 402, histidine 406, aspartate 443, histidine 444, and histidine 461.

It belongs to the BPG-independent phosphoglycerate mutase family. Monomer. Mn(2+) serves as cofactor.

It catalyses the reaction (2R)-2-phosphoglycerate = (2R)-3-phosphoglycerate. The protein operates within carbohydrate degradation; glycolysis; pyruvate from D-glyceraldehyde 3-phosphate: step 3/5. Catalyzes the interconversion of 2-phosphoglycerate and 3-phosphoglycerate. This chain is 2,3-bisphosphoglycerate-independent phosphoglycerate mutase, found in Listeria monocytogenes serovar 1/2a (strain ATCC BAA-679 / EGD-e).